A 183-amino-acid polypeptide reads, in one-letter code: Ribose 1,5-bisphosphate phosphokinase PhnN (183 aa).

The protein belongs to the ribose 1,5-bisphosphokinase family.

It catalyses the reaction alpha-D-ribose 1,5-bisphosphate + ATP = 5-phospho-alpha-D-ribose 1-diphosphate + ADP. Its pathway is metabolic intermediate biosynthesis; 5-phospho-alpha-D-ribose 1-diphosphate biosynthesis; 5-phospho-alpha-D-ribose 1-diphosphate from D-ribose 5-phosphate (route II): step 3/3. In terms of biological role, catalyzes the phosphorylation of ribose 1,5-bisphosphate to 5-phospho-D-ribosyl alpha-1-diphosphate (PRPP). The chain is Ribose 1,5-bisphosphate phosphokinase PhnN from Azotobacter vinelandii (strain DJ / ATCC BAA-1303).